Consider the following 440-residue polypeptide: 23S rRNA (uracil(1939)-C(5))-methyltransferase RlmD (440 aa).

The 59-residue stretch at 10-68 folds into the TRAM domain; sequence KSTQPQRIEFTVDSLDHHCVGIGRHQGKAIFIEGALPGELVKARILEDKKQYAHAALQQ. The [4Fe-4S] cluster site is built by cysteine 81, cysteine 87, cysteine 90, and cysteine 169. Positions 273, 302, 307, 323, 350, and 371 each coordinate S-adenosyl-L-methionine. The Nucleophile role is filled by cysteine 397.

Belongs to the class I-like SAM-binding methyltransferase superfamily. RNA M5U methyltransferase family. RlmD subfamily.

It catalyses the reaction uridine(1939) in 23S rRNA + S-adenosyl-L-methionine = 5-methyluridine(1939) in 23S rRNA + S-adenosyl-L-homocysteine + H(+). Its function is as follows. Catalyzes the formation of 5-methyl-uridine at position 1939 (m5U1939) in 23S rRNA. The chain is 23S rRNA (uracil(1939)-C(5))-methyltransferase RlmD from Aeromonas hydrophila subsp. hydrophila (strain ATCC 7966 / DSM 30187 / BCRC 13018 / CCUG 14551 / JCM 1027 / KCTC 2358 / NCIMB 9240 / NCTC 8049).